Reading from the N-terminus, the 833-residue chain is Vacuolar protein sorting-associated protein 16 homolog (833 aa).

This sequence belongs to the VPS16 family. As to quaternary structure, component of the homotypic fusion and vacuole protein sorting (HOPS) complex, composed of Vps16A, car/Vps33A, dor/Vps18, Vps39, Vps11 and lt/Vps41. Interacts with Syx17 (via SNARE domain); the interaction may involve multiple components of the HOPS complex and may promote assembly of the Syx17-Snap29-Vamp7 trans-SNARE complex. Component of the class C core vacuole/endosome tethering (CORVET) complex composed of at least Vps8, dor/Vps18, car/Vps33A and Vps16A; unlike in other species, Vps11 is not part of the Drosophila complex. Due to the reduced number of components the Drosophila CORVET complex is often referred to as the miniCORVET complex. The tethering complex core made up of Vps16A, car/Vps33A and dor/Vps18 and shared by both HOPS and CORVET, preferentially associates with CORVET-specific Vps8 over HOPS-specific lt/Vps41. Interacts with Rab2 (GTP-bound form).

The protein resides in the late endosome membrane. It localises to the lysosome membrane. It is found in the cytoplasmic vesicle. Its subcellular location is the autophagosome. Functionally, core component of the class C core vacuole/endosome tethering (CORVET) and the homotypic fusion and vacuole protein sorting (HOPS) tethering complexes involved in endo-lysosomal vesicle trafficking and lysosome biogenesis. The CORVET complex facilitates docking and fusion of endosomal vesicles during endosome maturation, acts upstream of HOPS, but is not involved in autophagic flux. The CORVET complex may cooperate with the early endosomal tether Rbsn-5 to mediate endosomal fusion. The HOPS complex facilitates docking and fusion of lysosomes with late endosomes and several other types of vesicles. The HOPS complex is also involved in autophagy and crinophagy (the elimination of unused secretory granules through their fusion with lysosomes). The HOPS complex mediates autophagocitic flux, probably by binding autophagosome-associated Syx17/syntaxin 17, promoting assembly of the trans-SNARE complex and instigating autophagosome-lysosome fusion. Independent of Syx17/syntaxin 17, HOPS is involved in biosynthetic transport to lysosomes and lysosome-related organelles such as eye-pigment granules. Required for endocytic degradation of boss/bride of sevenless and N/Notch in developing ommatidia. This Drosophila melanogaster (Fruit fly) protein is Vacuolar protein sorting-associated protein 16 homolog.